Consider the following 218-residue polypeptide: TPA-induced transmembrane protein homolog (218 aa).

The tract at residues 1–54 (MEEGSRSQSPREELELSMLDGPQEELTPLNNDLRIQPNSAEDPSPAQVGKESPW) is disordered. The chain crosses the membrane as a helical span at residues 66-86 (KLWMVIVTIFLCFIIVIVISL).

It is found in the endoplasmic reticulum membrane. This Mus musculus (Mouse) protein is TPA-induced transmembrane protein homolog.